The chain runs to 147 residues: Myoglobin (147 aa).

One can recognise a Globin domain in the interval 2 to 141 (ADFDAVLKCW…IIADLEANYK (140 aa)). Histidine 60 lines the nitrite pocket. Histidine 60 lines the O2 pocket. Histidine 89 provides a ligand contact to heme b.

This sequence belongs to the globin family. As to quaternary structure, monomeric.

It localises to the cytoplasm. Its subcellular location is the sarcoplasm. The enzyme catalyses Fe(III)-heme b-[protein] + nitric oxide + H2O = Fe(II)-heme b-[protein] + nitrite + 2 H(+). It catalyses the reaction H2O2 + AH2 = A + 2 H2O. Its function is as follows. Monomeric heme protein which primary function is to store oxygen and facilitate its diffusion within muscle tissues. Reversibly binds oxygen through a pentacoordinated heme iron and enables its timely and efficient release as needed during periods of heightened demand. Depending on the oxidative conditions of tissues and cells, and in addition to its ability to bind oxygen, it also has a nitrite reductase activity whereby it regulates the production of bioactive nitric oxide. Under stress conditions, like hypoxia and anoxia, it also protects cells against reactive oxygen species thanks to its pseudoperoxidase activity. The chain is Myoglobin (mb) from Thunnus alalunga (Albacore).